The sequence spans 362 residues: Neutral protease 2 homolog MEP2 (362 aa).

An N-terminal signal peptide occupies residues 1 to 19 (MLFPSIVAALAALANPVLS). Positions 20-177 (LTIPQATGSE…SKAINPISAR (158 aa)) are excised as a propeptide. Disulfide bonds link C184–C255 and C262–C280. Zn(2+) is bound at residue H304. E305 is an active-site residue. Zn(2+) is bound by residues H308 and D319.

This sequence belongs to the peptidase M35 family. The cofactor is Zn(2+).

Its subcellular location is the secreted. The enzyme catalyses Preferential cleavage of bonds with hydrophobic residues in P1'. Also 3-Asn-|-Gln-4 and 8-Gly-|-Ser-9 bonds in insulin B chain.. In terms of biological role, secreted metalloproteinase that allows assimilation of proteinaceous substrates. Shows high activities on basic nuclear substrates such as histone and protamine. May be involved in virulence. The polypeptide is Neutral protease 2 homolog MEP2 (MEP2) (Coccidioides posadasii (strain C735) (Valley fever fungus)).